We begin with the raw amino-acid sequence, 434 residues long: MSLPGSKLEEARRLVNEKQYNEAEQVYLSLLDKDSSQSSAAAGASVDDKRRNEQETSILELGQLYVTMGAKDKLREFIPHSTEYMMQFAKSKTVKVLKTLIEKFEQVPDSLDDQIFVCEKSIEFAKREKRVFLKHSLSIKLATLHYQKKQYKDSLALINDLLREFKKLDDKPSLVDVHLLESKVYHKLRNLAKSKASLTAARTAANSIYCPTQTVAELDLMSGILHCEDKDYKTAFSYFFESFESYHNLTTHNSYEKACQVLKYMLLSKIMLNLIDDVKNILNAKYTKETYQSRGIDAMKAVAEAYNNRSLLDFNTALKQYEKELMGDELTRSHFNALYDTLLESNLCKIIEPFECVEISHISKIIGLDTQQVEGKLSQMILDKIFYGVLDQGNGWLYVYETPNQDATYDSALELVGQLNKVVDQLFEKASVLY.

S2 bears the N-acetylserine mark. Residues 235–404 enclose the PCI domain; the sequence is AFSYFFESFE…GWLYVYETPN (170 aa).

It belongs to the proteasome subunit S9 family. Component of the lid subcomplex of the 19S proteasome regulatory particle complex (also named PA700 complex). The 26S proteasome consists of a 20S proteasome core and two 19S regulatory subunits. In terms of processing, N-acetylated by NAT1.

Component of the lid subcomplex of the 26S proteasome, a multiprotein complex involved in the ATP-dependent degradation of ubiquitinated proteins. In the complex, RPN6 is required for proteasome assembly. The protein is 26S proteasome regulatory subunit RPN6 (RPN6) of Saccharomyces cerevisiae (strain ATCC 204508 / S288c) (Baker's yeast).